The sequence spans 434 residues: Sulfide-quinone reductase (434 aa).

FAD contacts are provided by residues Gly8 to Gly12, Ser34 to Ala35, and Ser77 to Ala78. The active-site Cysteine persulfide intermediate is the Cys160. The FAD site is built by Ile302 and Gly322. The active-site Cysteine persulfide intermediate is the Cys356. Position 391 (Lys391) interacts with FAD.

The protein belongs to the SQRD family. As to quaternary structure, homodimer. It depends on FAD as a cofactor.

It is found in the membrane. The catalysed reaction is n a quinone + n hydrogen sulfide + n H(+) = polysulfur(n-2) + n a quinol. Functionally, catalyzes the oxidation of hydrogen sulfide, with the help of a quinone. Consecutive reaction cycles lead to the accumulation of a polysulfide product on the active site Cys residues; these products are released when they exceed a critical length, typically as cyclooctasulfur. The chain is Sulfide-quinone reductase from Acidithiobacillus ferrooxidans (strain ATCC 23270 / DSM 14882 / CIP 104768 / NCIMB 8455) (Ferrobacillus ferrooxidans (strain ATCC 23270)).